Here is a 162-residue protein sequence, read N- to C-terminus: Crossover junction endodeoxyribonuclease RuvC (162 aa).

Residues Asp-7, Glu-67, and Asp-140 contribute to the active site. Mg(2+) is bound by residues Asp-7, Glu-67, and Asp-140.

The protein belongs to the RuvC family. As to quaternary structure, homodimer which binds Holliday junction (HJ) DNA. The HJ becomes 2-fold symmetrical on binding to RuvC with unstacked arms; it has a different conformation from HJ DNA in complex with RuvA. In the full resolvosome a probable DNA-RuvA(4)-RuvB(12)-RuvC(2) complex forms which resolves the HJ. The cofactor is Mg(2+).

It is found in the cytoplasm. It carries out the reaction Endonucleolytic cleavage at a junction such as a reciprocal single-stranded crossover between two homologous DNA duplexes (Holliday junction).. The RuvA-RuvB-RuvC complex processes Holliday junction (HJ) DNA during genetic recombination and DNA repair. Endonuclease that resolves HJ intermediates. Cleaves cruciform DNA by making single-stranded nicks across the HJ at symmetrical positions within the homologous arms, yielding a 5'-phosphate and a 3'-hydroxyl group; requires a central core of homology in the junction. The consensus cleavage sequence is 5'-(A/T)TT(C/G)-3'. Cleavage occurs on the 3'-side of the TT dinucleotide at the point of strand exchange. HJ branch migration catalyzed by RuvA-RuvB allows RuvC to scan DNA until it finds its consensus sequence, where it cleaves and resolves the cruciform DNA. The sequence is that of Crossover junction endodeoxyribonuclease RuvC from Pseudothermotoga lettingae (strain ATCC BAA-301 / DSM 14385 / NBRC 107922 / TMO) (Thermotoga lettingae).